The following is a 352-amino-acid chain: Inorganic triphosphatase (352 aa).

The region spanning Leu6 to Gln203 is the CYTH domain.

It catalyses the reaction triphosphate + H2O = phosphate + diphosphate. Involved in the hydrolysis of the beta-gamma-phosphoanhydride linkage of triphosphate-containing substrates (inorganic or nucleoside-linked). Catalyzes the hydrolysis of inorganic triphosphate (PPPi), which could be cytotoxic because of its high affinity for calcium ion, thereby interfering with calcium signaling. The protein is Inorganic triphosphatase of Haemophilus influenzae (strain ATCC 51907 / DSM 11121 / KW20 / Rd).